The chain runs to 248 residues: Granulin (248 aa).

Belongs to the polyhedrin family.

Functionally, component of the virus occlusion bodies, which are large proteinaceous structures, that protect the virus from the outside environment for extended periods until they are ingested by insect larvae. This chain is Granulin, found in Xestia c-nigrum granulosis virus (XnGV).